Consider the following 122-residue polypeptide: Large ribosomal subunit protein uL14 (122 aa).

Belongs to the universal ribosomal protein uL14 family. As to quaternary structure, part of the 50S ribosomal subunit. Forms a cluster with proteins L3 and L19. In the 70S ribosome, L14 and L19 interact and together make contacts with the 16S rRNA in bridges B5 and B8.

Its function is as follows. Binds to 23S rRNA. Forms part of two intersubunit bridges in the 70S ribosome. In Nocardioides sp. (strain ATCC BAA-499 / JS614), this protein is Large ribosomal subunit protein uL14.